Reading from the N-terminus, the 252-residue chain is ATP synthase subunit a (252 aa).

The next 6 helical transmembrane spans lie at 29-49, 87-107, 117-137, 146-166, 188-208, and 211-231; these read FTNS…FLFL, FFPL…LGLF, IIVT…YGFM, LFVP…IEVI, ITLK…AVGV, and SILP…VAFL.

The protein belongs to the ATPase A chain family. As to quaternary structure, F-type ATPases have 2 components, CF(1) - the catalytic core - and CF(0) - the membrane proton channel. CF(1) has five subunits: alpha(3), beta(3), gamma(1), delta(1), epsilon(1). CF(0) has three main subunits: a(1), b(2) and c(9-12). The alpha and beta chains form an alternating ring which encloses part of the gamma chain. CF(1) is attached to CF(0) by a central stalk formed by the gamma and epsilon chains, while a peripheral stalk is formed by the delta and b chains.

Its subcellular location is the cell inner membrane. Key component of the proton channel; it plays a direct role in the translocation of protons across the membrane. This Mesorhizobium japonicum (strain LMG 29417 / CECT 9101 / MAFF 303099) (Mesorhizobium loti (strain MAFF 303099)) protein is ATP synthase subunit a.